Reading from the N-terminus, the 328-residue chain is 2,3-diketo-L-gulonate-binding periplasmic protein YiaO (328 aa).

Residues 1–24 form the signal peptide; that stretch reads MKLRSVTYALFIAGLAAFSTSSLA.

As to quaternary structure, the complex comprises the extracytoplasmic solute receptor protein YiaO, and the two transmembrane proteins YiaM and YiaN.

It localises to the periplasm. Its function is as follows. Part of the tripartite ATP-independent periplasmic (TRAP) transport system YiaMNO involved in the uptake of 2,3-diketo-L-gulonate. This protein specifically binds 2,3-diketo-L-gulonate. Is not able to bind either L-ascorbate or dehydroascorbate. The chain is 2,3-diketo-L-gulonate-binding periplasmic protein YiaO (yiaO) from Escherichia coli (strain K12).